The chain runs to 340 residues: Glutaminyl-peptide cyclotransferase (340 aa).

A signal peptide spans 1-23 (MAIGSVVFAAAGLLLLLLPPSHQ). N42 is a glycosylation site (N-linked (GlcNAc...) asparagine). 2 residues coordinate alpha-D-mannopyranose: R85 and E91. The cysteines at positions 113 and 136 are disulfide-linked. D131 is a binding site for Zn(2+). Residues Q151 and R155 each contribute to the alpha-D-mannopyranose site. N156 carries an N-linked (GlcNAc...) asparagine glycan. Catalysis depends on E170, which acts as the Proton acceptor. A Zn(2+)-binding site is contributed by E171. D218 serves as the catalytic Proton acceptor. Residue H297 coordinates Zn(2+). An alpha-D-mannopyranose-binding site is contributed by L306.

The protein belongs to the glutaminyl-peptide cyclotransferase family.

It localises to the secreted. The enzyme catalyses N-terminal L-glutaminyl-[peptide] = N-terminal 5-oxo-L-prolyl-[peptide] + NH4(+). Its activity is regulated as follows. Inhibited by imidazoles (imidazole, benzimidazole, 1-benzylimidazole, 1-methylimidazole, P150/03, N-omega-acetylhistamine and 4-methylimidazole) and cysteamines (cysteamine, N-dimethylcysteamine and N-diethylcysteamine). Partially inhibited by PDB50 1(3,4-dimethoxyphenyl)-3-(3-imidazol-1-ylpropyl)thiourea. In terms of biological role, acts as a glutaminyl-peptide cyclotransferase. Responsible for the biosynthesis of pyroglutamyl peptides. Might be more efficient in the conversion of tri and tetrapeptides in vitro. Might have a relative preference for substrates containing hydrophobic amino acids in vitro. In Drosophila melanogaster (Fruit fly), this protein is Glutaminyl-peptide cyclotransferase.